The following is an 82-amino-acid chain: Sulfur carrier protein TusA (82 aa).

The Cysteine persulfide intermediate role is filled by cysteine 19.

It belongs to the sulfur carrier protein TusA family.

It localises to the cytoplasm. Sulfur carrier protein which probably makes part of a sulfur-relay system. This is Sulfur carrier protein TusA from Vibrio parahaemolyticus serotype O3:K6 (strain RIMD 2210633).